A 177-amino-acid polypeptide reads, in one-letter code: B-phycoerythrin beta chain (177 aa).

2 residues coordinate phycourobilin: Cys-50 and Cys-61. The residue at position 72 (Asn-72) is an N4-methylasparagine. Positions 82 and 158 each coordinate (2R,3E)-phycoerythrobilin.

The protein belongs to the phycobiliprotein family. Heteromer of 6 alpha, 6 beta and one gamma chain. Post-translationally, contains two covalently linked phycoerythrobilin chromophores and one covalently linked phycourobilin chromophore.

The protein localises to the plastid. The protein resides in the chloroplast thylakoid membrane. In terms of biological role, light-harvesting photosynthetic bile pigment-protein from the phycobiliprotein complex. In Porphyridium purpureum (Red alga), this protein is B-phycoerythrin beta chain (cpeB).